The chain runs to 894 residues: Pentatricopeptide repeat-containing protein At1g19720 (894 aa).

PPR repeat units follow at residues 80 to 110 (KRST…FGLF), 114 to 144 (DVFV…MRER), 145 to 179 (NLFT…GVLP), 180 to 214 (DDFL…GMSS), 215 to 245 (CLRV…MRER), 246 to 280 (DVIA…GISP), 281 to 315 (GLVT…GITA), 316 to 350 (DVFT…GVVP), 351 to 385 (NAVT…GFID), 386 to 416 (DVLV…VKNK), 417 to 451 (DVYT…NLRP), 452 to 486 (NIIT…GKVQ), 488 to 522 (NTAT…RFMP), 523 to 557 (NSVT…NLDA), 558 to 588 (IHAV…METK), 589 to 623 (DIIT…GITP), 624 to 659 (NRGT…HIIP), and 660 to 694 (ALEH…SETP). Positions 695–770 (IWESFLTGCR…PLGQSWIEVR (76 aa)) are type E motif. Residues 771 to 801 (NLIHTFTTGDQSKLCTDVLYPLVEKMSRLDN) form a type E(+) motif region. A type DYW motif region spans residues 803 to 894 (SDQYNGELWI…NGDCSCKDYW (92 aa)).

It belongs to the PPR family. PCMP-H subfamily.

This Arabidopsis thaliana (Mouse-ear cress) protein is Pentatricopeptide repeat-containing protein At1g19720 (DYW7).